A 507-amino-acid polypeptide reads, in one-letter code: Maturase K (507 aa).

This sequence belongs to the intron maturase 2 family. MatK subfamily.

The protein localises to the plastid. Its subcellular location is the chloroplast. Functionally, usually encoded in the trnK tRNA gene intron. Probably assists in splicing its own and other chloroplast group II introns. In Cryptomeria japonica (Japanese cedar), this protein is Maturase K.